Here is a 203-residue protein sequence, read N- to C-terminus: Probable chemoreceptor glutamine deamidase CheD (203 aa).

Belongs to the CheD family.

It carries out the reaction L-glutaminyl-[protein] + H2O = L-glutamyl-[protein] + NH4(+). Probably deamidates glutamine residues to glutamate on methyl-accepting chemotaxis receptors (MCPs), playing an important role in chemotaxis. This chain is Probable chemoreceptor glutamine deamidase CheD, found in Methylobacillus flagellatus (strain ATCC 51484 / DSM 6875 / VKM B-1610 / KT).